A 37-amino-acid polypeptide reads, in one-letter code: Cytochrome b6-f complex subunit 5 (37 aa).

A helical transmembrane segment spans residues 5–25; that stretch reads LLSGIVLGLIPITLLGLFVTA.

This sequence belongs to the PetG family. In terms of assembly, the 4 large subunits of the cytochrome b6-f complex are cytochrome b6, subunit IV (17 kDa polypeptide, PetD), cytochrome f and the Rieske protein, while the 4 small subunits are PetG, PetL, PetM and PetN. The complex functions as a dimer.

It localises to the plastid. It is found in the chloroplast thylakoid membrane. Functionally, component of the cytochrome b6-f complex, which mediates electron transfer between photosystem II (PSII) and photosystem I (PSI), cyclic electron flow around PSI, and state transitions. PetG is required for either the stability or assembly of the cytochrome b6-f complex. The sequence is that of Cytochrome b6-f complex subunit 5 from Marchantia polymorpha (Common liverwort).